Reading from the N-terminus, the 403-residue chain is Formin-like protein 21b (403 aa).

In terms of domain architecture, FH2 spans 1–380; that stretch reads MELLFTATLL…KAAKEAEMEK (380 aa). The disordered stretch occupies residues 373–403; that stretch reads AKEAEMEKTKKRVSLTNKKASGVGEEESCLI.

It belongs to the formin-like family. Class-II subfamily.

This chain is Formin-like protein 21b (FH21B), found in Arabidopsis thaliana (Mouse-ear cress).